The sequence spans 479 residues: Sulfate adenylyltransferase subunit 1 (479 aa).

The region spanning 22-238 (KDMLRFLTCG…DSMDISKEPK (217 aa)) is the tr-type G domain. Positions 31 to 38 (GSVDDGKS) are G1. A GTP-binding site is contributed by 31 to 38 (GSVDDGKS). The interval 89-93 (GITID) is G2. The interval 110–113 (DTPG) is G3. GTP-binding positions include 110-114 (DTPGH) and 165-168 (NKMD). Residues 165–168 (NKMD) form a G4 region. Positions 202–204 (SAL) are G5.

This sequence belongs to the TRAFAC class translation factor GTPase superfamily. Classic translation factor GTPase family. CysN/NodQ subfamily. As to quaternary structure, heterodimer composed of CysD, the smaller subunit, and CysN.

The catalysed reaction is sulfate + ATP + H(+) = adenosine 5'-phosphosulfate + diphosphate. It functions in the pathway sulfur metabolism; hydrogen sulfide biosynthesis; sulfite from sulfate: step 1/3. Its function is as follows. With CysD forms the ATP sulfurylase (ATPS) that catalyzes the adenylation of sulfate producing adenosine 5'-phosphosulfate (APS) and diphosphate, the first enzymatic step in sulfur assimilation pathway. APS synthesis involves the formation of a high-energy phosphoric-sulfuric acid anhydride bond driven by GTP hydrolysis by CysN coupled to ATP hydrolysis by CysD. In Sulfurovum sp. (strain NBC37-1), this protein is Sulfate adenylyltransferase subunit 1.